The primary structure comprises 244 residues: Glucosamine-6-phosphate deaminase (244 aa).

The active-site Proton acceptor; for enolization step is aspartate 67. Residue asparagine 136 is the For ring-opening step of the active site. Histidine 138 (proton acceptor; for ring-opening step) is an active-site residue. The For ring-opening step role is filled by glutamate 143.

This sequence belongs to the glucosamine/galactosamine-6-phosphate isomerase family. NagB subfamily.

The catalysed reaction is alpha-D-glucosamine 6-phosphate + H2O = beta-D-fructose 6-phosphate + NH4(+). It functions in the pathway amino-sugar metabolism; N-acetylneuraminate degradation; D-fructose 6-phosphate from N-acetylneuraminate: step 5/5. Functionally, catalyzes the reversible isomerization-deamination of glucosamine 6-phosphate (GlcN6P) to form fructose 6-phosphate (Fru6P) and ammonium ion. The sequence is that of Glucosamine-6-phosphate deaminase from Clostridium botulinum (strain ATCC 19397 / Type A).